Reading from the N-terminus, the 146-residue chain is Hemoglobin subunit beta-1 (146 aa).

Positions 2-146 constitute a Globin domain; it reads VWTNEERSII…VVSALGKQYH (145 aa). Positions 63 and 92 each coordinate heme b.

The protein belongs to the globin family. In terms of assembly, hb1 is a heterotetramer of two alpha chains and two beta-1 chains. In terms of tissue distribution, red blood cells.

Involved in oxygen transport from gills to the various peripheral tissues. In Pseudaphritis urvillii (Congolli), this protein is Hemoglobin subunit beta-1 (hbb1).